The following is a 62-amino-acid chain: Metallothionein-like protein 3A (62 aa).

The protein belongs to the metallothionein superfamily. Type 15 family.

Metallothioneins have a high content of cysteine residues that bind various heavy metals. This is Metallothionein-like protein 3A (MT3A) from Oryza sativa subsp. indica (Rice).